The primary structure comprises 84 residues: Large ribosomal subunit protein bL27 (84 aa).

Positions 1–27 (MAHKKGQGASRNGRDSKSKRLGVKVGA) are disordered.

Belongs to the bacterial ribosomal protein bL27 family.

The sequence is that of Large ribosomal subunit protein bL27 from Chlamydia pneumoniae (Chlamydophila pneumoniae).